Consider the following 563-residue polypeptide: Membrane protein insertase YidC (563 aa).

A helical transmembrane segment spans residues 6-26; it reads TVLWMIFSFSLLLLWNNWQIH. Residues 36–70 form a disordered region; sequence PAPEAAATQQPKADANGTAASSTASIPSSPAAAPA. Positions 54-70 are enriched in low complexity; that stretch reads AASSTASIPSSPAAAPA. Transmembrane regions (helical) follow at residues 373-393, 443-463, 482-502, and 512-532; these read WGWTIVALTVIIKAVFFPLAA, LPMVVQIPVFIALYWVLLASV, PFFILPAIMMATMFLQIKLNP, and VMMIMPLVFGGMMFFFPAGLV.

The protein belongs to the OXA1/ALB3/YidC family. Type 1 subfamily. As to quaternary structure, interacts with the Sec translocase complex via SecD. Specifically interacts with transmembrane segments of nascent integral membrane proteins during membrane integration.

It is found in the cell inner membrane. In terms of biological role, required for the insertion and/or proper folding and/or complex formation of integral membrane proteins into the membrane. Involved in integration of membrane proteins that insert both dependently and independently of the Sec translocase complex, as well as at least some lipoproteins. Aids folding of multispanning membrane proteins. In Bordetella parapertussis (strain 12822 / ATCC BAA-587 / NCTC 13253), this protein is Membrane protein insertase YidC.